The sequence spans 360 residues: DNA replication and repair protein RecF (360 aa).

Residue 33-40 (GENGSGKT) participates in ATP binding.

This sequence belongs to the RecF family.

Its subcellular location is the cytoplasm. In terms of biological role, the RecF protein is involved in DNA metabolism; it is required for DNA replication and normal SOS inducibility. RecF binds preferentially to single-stranded, linear DNA. It also seems to bind ATP. This is DNA replication and repair protein RecF from Rickettsia akari (strain Hartford).